The chain runs to 257 residues: Zinc transporter ZupT (257 aa).

Helical transmembrane passes span 5–25 (LILT…GVLG), 32–52 (VLAF…LMEM), 61–81 (GMSP…YFGL), 109–129 (AILL…ATFV), 137–157 (LGFG…LAVA), 171–191 (IFWA…AWLI), 195–215 (LVSP…MVAL), and 236–256 (GVLC…TIGI). Fe(2+) is bound by residues N120 and E123. Zn(2+)-binding residues include E123 and H148. Fe(2+)-binding residues include N149, E152, and E181. Residue E152 participates in Zn(2+) binding.

The protein belongs to the ZIP transporter (TC 2.A.5) family. ZupT subfamily.

Its subcellular location is the cell inner membrane. The enzyme catalyses Zn(2+)(in) = Zn(2+)(out). Its function is as follows. Mediates zinc uptake. May also transport other divalent cations. The protein is Zinc transporter ZupT of Salmonella agona (strain SL483).